The chain runs to 282 residues: Pseudokinase OPG198 (282 aa).

Residues Met1 and Lys30 each contribute to the ATP site. Positions Met1–Asp282 constitute a Protein kinase domain.

Belongs to the protein kinase superfamily. Ser/Thr protein kinase family. Poxviruses subfamily. Interacts with B1/VPK1. Interacts with host VRK1. Interacts with host VRK2.

Its subcellular location is the host nucleus. With respect to regulation, both catalytically active kinases B1/VPK1 and host VRK2 repress B12 inhibitory activity in a B1/VPK1 deletion mutant strain. Functionally, pseudokinase that plays a role in viral DNA replication repression by activating the antiviral protein BANF1 and inhibiting the activity of host VRK1, a cellular modulator of BANF1. In Cynomys gunnisoni (Gunnison's prairie dog), this protein is Pseudokinase OPG198 (OPG198).